The primary structure comprises 195 residues: Cytochrome c oxidase assembly protein CtaG (195 aa).

Residues 1 to 9 are Cytoplasmic-facing; that stretch reads MALNGPQKT. A helical; Signal-anchor for type II membrane protein membrane pass occupies residues 10 to 30; that stretch reads VVQLVGVVVLMGGLAWASVPF. The Periplasmic portion of the chain corresponds to 31–195; that stretch reads YDWFCRVTGF…DTSGAETELN (165 aa).

This sequence belongs to the COX11/CtaG family.

The protein localises to the cell inner membrane. Exerts its effect at some terminal stage of cytochrome c oxidase synthesis, probably by being involved in the insertion of the copper B into subunit I. In Ruegeria sp. (strain TM1040) (Silicibacter sp.), this protein is Cytochrome c oxidase assembly protein CtaG.